The following is a 242-amino-acid chain: Small ribosomal subunit protein uS7m (242 aa).

The transit peptide at 1–37 (MAAPALRAPLRWSGLALGVRCAVWNLPGLTQVRGSRY) directs the protein to the mitochondrion. Position 228 is an N6-acetyllysine (lysine 228).

This sequence belongs to the universal ribosomal protein uS7 family. Component of the mitochondrial ribosome small subunit (28S) which comprises a 12S rRNA and about 30 distinct proteins.

Its subcellular location is the mitochondrion. The polypeptide is Small ribosomal subunit protein uS7m (Mrps7) (Mus musculus (Mouse)).